The chain runs to 166 residues: Ribosome maturation factor RimM (166 aa).

Residues 91–163 form the PRC barrel domain; sequence EDEFYEFQLI…KMQITPPEGW (73 aa).

The protein belongs to the RimM family. In terms of assembly, binds ribosomal protein uS19.

Its subcellular location is the cytoplasm. In terms of biological role, an accessory protein needed during the final step in the assembly of 30S ribosomal subunit, possibly for assembly of the head region. Essential for efficient processing of 16S rRNA. May be needed both before and after RbfA during the maturation of 16S rRNA. It has affinity for free ribosomal 30S subunits but not for 70S ribosomes. In Sulfurihydrogenibium sp. (strain YO3AOP1), this protein is Ribosome maturation factor RimM.